The following is a 350-amino-acid chain: GTP 3',8-cyclase (350 aa).

The Radical SAM core domain occupies 27 to 245 (TFGRIATDLR…LRAHFTLVPD (219 aa)). R36 contributes to the GTP binding site. 2 residues coordinate [4Fe-4S] cluster: C43 and C47. Residue Y49 coordinates S-adenosyl-L-methionine. A [4Fe-4S] cluster-binding site is contributed by C50. R87 serves as a coordination point for GTP. Position 91 (G91) interacts with S-adenosyl-L-methionine. GTP is bound at residue T118. S-adenosyl-L-methionine is bound at residue S142. K179 serves as a coordination point for GTP. Residue M213 coordinates S-adenosyl-L-methionine. Residues C277 and C280 each contribute to the [4Fe-4S] cluster site. Position 282–284 (282–284 (RTR)) interacts with GTP. A [4Fe-4S] cluster-binding site is contributed by C294.

This sequence belongs to the radical SAM superfamily. MoaA family. In terms of assembly, monomer and homodimer. The cofactor is [4Fe-4S] cluster.

The enzyme catalyses GTP + AH2 + S-adenosyl-L-methionine = (8S)-3',8-cyclo-7,8-dihydroguanosine 5'-triphosphate + 5'-deoxyadenosine + L-methionine + A + H(+). It functions in the pathway cofactor biosynthesis; molybdopterin biosynthesis. Its function is as follows. Catalyzes the cyclization of GTP to (8S)-3',8-cyclo-7,8-dihydroguanosine 5'-triphosphate. This Mycobacterium sp. (strain JLS) protein is GTP 3',8-cyclase.